The chain runs to 202 residues: Holliday junction branch migration complex subunit RuvA (202 aa).

A domain I region spans residues Met1–Ser63. Positions Thr64 to Ser142 are domain II. Positions Ala143–Asn153 are flexible linker. A domain III region spans residues Asn153–Leu202.

Belongs to the RuvA family. As to quaternary structure, homotetramer. Forms an RuvA(8)-RuvB(12)-Holliday junction (HJ) complex. HJ DNA is sandwiched between 2 RuvA tetramers; dsDNA enters through RuvA and exits via RuvB. An RuvB hexamer assembles on each DNA strand where it exits the tetramer. Each RuvB hexamer is contacted by two RuvA subunits (via domain III) on 2 adjacent RuvB subunits; this complex drives branch migration. In the full resolvosome a probable DNA-RuvA(4)-RuvB(12)-RuvC(2) complex forms which resolves the HJ.

It is found in the cytoplasm. Its function is as follows. The RuvA-RuvB-RuvC complex processes Holliday junction (HJ) DNA during genetic recombination and DNA repair, while the RuvA-RuvB complex plays an important role in the rescue of blocked DNA replication forks via replication fork reversal (RFR). RuvA specifically binds to HJ cruciform DNA, conferring on it an open structure. The RuvB hexamer acts as an ATP-dependent pump, pulling dsDNA into and through the RuvAB complex. HJ branch migration allows RuvC to scan DNA until it finds its consensus sequence, where it cleaves and resolves the cruciform DNA. The sequence is that of Holliday junction branch migration complex subunit RuvA from Porphyromonas gingivalis (strain ATCC BAA-308 / W83).